The primary structure comprises 205 residues: MIGRLRGVLIEKQAPEVLIDVNGVGYELQMPLTSFYELPEVNQPTTVYTHFVVREDAQLLYGFITKKERSLFRLLIKANGVGPKLALTILSGMTASEFVGCVERDDIVTLVKLPGVGKKTAERLLVEMRDKLKSLMEASVGSEREFVLQSNYSPAPTVNSAEEDAISALLSLGYKPPQASKAVSAAYKEGMDSETLIKAALKSML.

The tract at residues 1 to 64 is domain I; that stretch reads MIGRLRGVLI…EDAQLLYGFI (64 aa). Residues 65–143 form a domain II region; it reads TKKERSLFRL…SLMEASVGSE (79 aa). Residues 144-156 form a flexible linker region; the sequence is REFVLQSNYSPAP. The domain III stretch occupies residues 157–205; it reads TVNSAEEDAISALLSLGYKPPQASKAVSAAYKEGMDSETLIKAALKSML.

Belongs to the RuvA family. In terms of assembly, homotetramer. Forms an RuvA(8)-RuvB(12)-Holliday junction (HJ) complex. HJ DNA is sandwiched between 2 RuvA tetramers; dsDNA enters through RuvA and exits via RuvB. An RuvB hexamer assembles on each DNA strand where it exits the tetramer. Each RuvB hexamer is contacted by two RuvA subunits (via domain III) on 2 adjacent RuvB subunits; this complex drives branch migration. In the full resolvosome a probable DNA-RuvA(4)-RuvB(12)-RuvC(2) complex forms which resolves the HJ.

It is found in the cytoplasm. Its function is as follows. The RuvA-RuvB-RuvC complex processes Holliday junction (HJ) DNA during genetic recombination and DNA repair, while the RuvA-RuvB complex plays an important role in the rescue of blocked DNA replication forks via replication fork reversal (RFR). RuvA specifically binds to HJ cruciform DNA, conferring on it an open structure. The RuvB hexamer acts as an ATP-dependent pump, pulling dsDNA into and through the RuvAB complex. HJ branch migration allows RuvC to scan DNA until it finds its consensus sequence, where it cleaves and resolves the cruciform DNA. The polypeptide is Holliday junction branch migration complex subunit RuvA (Shewanella sp. (strain MR-4)).